Consider the following 145-residue polypeptide: Large ribosomal subunit protein uL11 (145 aa).

The protein belongs to the universal ribosomal protein uL11 family. As to quaternary structure, part of the ribosomal stalk of the 50S ribosomal subunit. Interacts with L10 and the large rRNA to form the base of the stalk. L10 forms an elongated spine to which L12 dimers bind in a sequential fashion forming a multimeric L10(L12)X complex. In terms of processing, one or more lysine residues are methylated.

Its function is as follows. Forms part of the ribosomal stalk which helps the ribosome interact with GTP-bound translation factors. The sequence is that of Large ribosomal subunit protein uL11 from Rickettsia canadensis (strain McKiel).